We begin with the raw amino-acid sequence, 523 residues long: Mediator of RNA polymerase II transcription subunit 1.2 (523 aa).

This sequence belongs to the Mediator complex subunit 1 family. In terms of assembly, component of the Mediator complex.

It is found in the nucleus. In terms of biological role, component of the Mediator complex, a coactivator involved in the regulated transcription of nearly all RNA polymerase II-dependent genes. Mediator functions as a bridge to convey information from gene-specific regulatory proteins to the basal RNA polymerase II transcription machinery. Mediator is recruited to promoters by direct interactions with regulatory proteins and serves as a scaffold for the assembly of a functional preinitiation complex with RNA polymerase II and the general transcription factors. The sequence is that of Mediator of RNA polymerase II transcription subunit 1.2 (mdt-1.2) from Caenorhabditis briggsae.